Reading from the N-terminus, the 144-residue chain is Large ribosomal subunit protein uL15 (144 aa).

The segment at 1 to 52 (MRLNTLSPAEGAKHSAKRLGRGIGSGLGKTGGRGHKGQKSRTGSGVRRGFEG) is disordered. Residues 21-31 (RGIGSGLGKTG) are compositionally biased toward gly residues.

The protein belongs to the universal ribosomal protein uL15 family. As to quaternary structure, part of the 50S ribosomal subunit.

Functionally, binds to the 23S rRNA. The chain is Large ribosomal subunit protein uL15 from Haemophilus influenzae (strain 86-028NP).